Here is a 221-residue protein sequence, read N- to C-terminus: Eukaryotic translation initiation factor 3 subunit K (221 aa).

The 170-residue stretch at 46-215 folds into the PCI domain; that stretch reads YDLEANLACL…EKIEFDNLAP (170 aa).

It belongs to the eIF-3 subunit K family. As to quaternary structure, component of the eukaryotic translation initiation factor 3 (eIF-3) complex.

It localises to the cytoplasm. Component of the eukaryotic translation initiation factor 3 (eIF-3) complex, which is involved in protein synthesis of a specialized repertoire of mRNAs and, together with other initiation factors, stimulates binding of mRNA and methionyl-tRNAi to the 40S ribosome. The eIF-3 complex specifically targets and initiates translation of a subset of mRNAs involved in cell proliferation. The sequence is that of Eukaryotic translation initiation factor 3 subunit K from Anopheles gambiae (African malaria mosquito).